We begin with the raw amino-acid sequence, 279 residues long: Acetylglutamate kinase (279 aa).

Residues Gly-64–Gly-65, Arg-86, and Asn-177 contribute to the substrate site.

This sequence belongs to the acetylglutamate kinase family. ArgB subfamily.

Its subcellular location is the cytoplasm. It catalyses the reaction N-acetyl-L-glutamate + ATP = N-acetyl-L-glutamyl 5-phosphate + ADP. It participates in amino-acid biosynthesis; L-arginine biosynthesis; N(2)-acetyl-L-ornithine from L-glutamate: step 2/4. Its function is as follows. Catalyzes the ATP-dependent phosphorylation of N-acetyl-L-glutamate. The chain is Acetylglutamate kinase from Campylobacter jejuni subsp. jejuni serotype O:23/36 (strain 81-176).